Consider the following 515-residue polypeptide: MTVAEQQPQHQGYANPGTPGSVVTFKKRYDNFIGGQWVPPVKGQYFDNASPVDGKVFTQAARSTAEDVELALDAAHRAAPAWGRTSVTERSNILLKIADRMEQNLEMLAVAETWDNGKPVRETLAADLPLAIDHFRYFAGCIRAQEGGLSQIDDSTVAYHFHEPLGVVGQIIPWNFPLLMGVWKLAPALAAGNAVVLKPAEQTPASIMVLMELIADLLPEGVVNVVNGFGLEAGKPLASSPRIAKIAFTGETNTGRLIMGYAADNLIPVTLELGGKSPNIFFDDVMMEDDAFLDKAVEGMVMFALNQGEVCTCPSRALIQESIYDRFMERAVQRVEAITMGHPLDPGTMIGAQASTEQLDKILSYLDIGRAEGAEVLTGGERGQREGLEEGFYVKPTIFKGHNKMRIFQEEIFGPVLAAATFKDEAEALELANDTLYGLGAGLWTRDISRAYRMGRGIQAGRVWTNCYHVYPAHAAFGGYKQSGIGRENHRMMLDHYQQTKNLLVSYSPNKMGFF.

Polar residues predominate over residues 1–12; the sequence is MTVAEQQPQHQG. The disordered stretch occupies residues 1-20; sequence MTVAEQQPQHQGYANPGTPG. NAD(+) is bound at residue 228–234; it reads GFGLEAG. Active-site residues include Glu272 and Cys311.

This sequence belongs to the aldehyde dehydrogenase family.

It carries out the reaction an aldehyde + NAD(+) + H2O = a carboxylate + NADH + 2 H(+). This chain is Aldehyde dehydrogenase (aldA), found in Deinococcus radiodurans (strain ATCC 13939 / DSM 20539 / JCM 16871 / CCUG 27074 / LMG 4051 / NBRC 15346 / NCIMB 9279 / VKM B-1422 / R1).